Consider the following 794-residue polypeptide: Protocadherin beta-6 (794 aa).

Residues 1-27 (MMQTKVQNKKRQVAFFILLMLWGEVGS) form the signal peptide. The Extracellular portion of the chain corresponds to 28-688 (ESIQYSVLEE…AQADSLTVYL (661 aa)). Cadherin domains are found at residues 34-132 (VLEE…APEF), 137-241 (MLLK…VPEF), 246-345 (YEAQ…APEL), 350-449 (FISL…APAF), and 454-559 (YTLF…SPFV). Residue N46 is glycosylated (N-linked (GlcNAc...) asparagine). C95 and C101 are disulfide-bonded. Residue N183 is glycosylated (N-linked (GlcNAc...) asparagine). An N-linked (GlcNAc...) asparagine glycan is attached at N416. N565 carries N-linked (GlcNAc...) asparagine glycosylation. A Cadherin 6 domain is found at 566-669 (GSAPCTELVP…LVDGFSQPYL (104 aa)). The chain crosses the membrane as a helical span at residues 689 to 709 (VVALASVSSLFLFSVLLFVAV). Over 710–794 (RLCRRSRAAS…PTSRNSFPFS (85 aa)) the chain is Cytoplasmic. A disordered region spans residues 773–794 (PPQGTEREMEETPTSRNSFPFS). The span at 784-794 (TPTSRNSFPFS) shows a compositional bias: polar residues.

As to quaternary structure, forms homodimers in trans (molecules expressed by two different cells). Forms promiscuous heterodimers in cis (at the plasma membrane of the same cell) with other protocadherins.

Its subcellular location is the cell membrane. In terms of biological role, calcium-dependent cell-adhesion protein involved in cells self-recognition and non-self discrimination. Thereby, it is involved in the establishment and maintenance of specific neuronal connections in the brain. In Homo sapiens (Human), this protein is Protocadherin beta-6.